The primary structure comprises 708 residues: Alpha-galactosidase (708 aa).

Asp-441 serves as the catalytic Nucleophile. Asp-505 (proton donor) is an active-site residue.

It belongs to the glycosyl hydrolase 36 family. As to quaternary structure, homotetramer.

The enzyme catalyses Hydrolysis of terminal, non-reducing alpha-D-galactose residues in alpha-D-galactosides, including galactose oligosaccharides, galactomannans and galactolipids.. The polypeptide is Alpha-galactosidase (rafA) (Escherichia coli).